The sequence spans 636 residues: Leucine-rich repeat and fibronectin type-III domain-containing protein 4 (636 aa).

Residues 1-16 form the signal peptide; sequence MAPPLLLLLLASGAAA. The 32-residue stretch at 17–48 folds into the LRRNT domain; that stretch reads CPLPCVCQNLSESLSTLCAHRGLLFVPPNVDR. Topologically, residues 17 to 518 are extracellular; it reads CPLPCVCQNL…LQAHVLGGTL (502 aa). N25 is a glycosylation site (N-linked (GlcNAc...) asparagine). 7 LRR repeats span residues 49 to 70, 73 to 94, 97 to 118, 121 to 142, 146 to 169, 170 to 191, and 194 to 215; these read RTVE…DFRN, GLVD…SFGD, SLRS…SLRG, NLQH…AFDD, SLED…GSMP, ALHT…VFAQ, and QLSR…PLFS. Residues 234–280 form the LRRCT domain; it reads NPLHCNCELLWLRRLARPDDLETCASPPTLAGRYFWAVPEGEFSCEP. The 87-residue stretch at 281 to 367 folds into the Ig-like domain; sequence PLIARHTQRL…GEATARVELR (87 aa). C302 and C351 are oxidised to a cystine. N333 is a glycosylation site (N-linked (GlcNAc...) asparagine). The region spanning 405 to 502 is the Fibronectin type-III domain; the sequence is SEPAVQVTEV…GCAHFSTLPA (98 aa). A helical membrane pass occupies residues 519 to 539; it reads TVAVGGVLVAALLVFTVALLV. Residues 540–636 are Cytoplasmic-facing; that stretch reads RGRGAGNGRL…SAERLEESVV (97 aa). The interval 556-585 is disordered; the sequence is VQSQTNGGTSPMPKSHPPRSPPPRPQRSCS. Residues 569–580 are compositionally biased toward pro residues; it reads KSHPPRSPPPRP. 2 positions are modified to phosphoserine: S585 and S627. Positions 633–636 match the PDZ-binding motif; it reads ESVV.

It belongs to the LRFN family. As to quaternary structure, forms heteromeric complexes with LRFN1 and LRFN2. Can form heteromeric complexes with LRFN3 and LRFN5. Unable to form homophilic interactions across cell junctions. Interacts with DLG1, DLG2, DLG3 and DLG4. Glycosylated.

It localises to the membrane. Promotes neurite outgrowth in hippocampal neurons. May play a role in redistributing DLG4 to the cell periphery. This Rattus norvegicus (Rat) protein is Leucine-rich repeat and fibronectin type-III domain-containing protein 4 (Lrfn4).